Reading from the N-terminus, the 184-residue chain is Envelope protein 169 (184 aa).

At 1 to 6 (MKKYIK) the chain is on the intravirion side. The helical transmembrane segment at 7–27 (MYLVLLIAIILFITILVIFLI) threads the bilayer. The Virion surface portion of the chain corresponds to 28-184 (SGLFYPEQNP…TVMAIPRKVL (157 aa)).

Belongs to the asfivirus envelope protein p22 family.

It is found in the virion membrane. The protein localises to the host cell membrane. In Ornithodoros (relapsing fever ticks), this protein is Envelope protein 169.